Consider the following 441-residue polypeptide: NADH-quinone oxidoreductase subunit D 1 (441 aa).

This sequence belongs to the complex I 49 kDa subunit family. NDH-1 is composed of 14 different subunits. Subunits NuoB, C, D, E, F, and G constitute the peripheral sector of the complex.

It localises to the cell membrane. The enzyme catalyses a quinone + NADH + 5 H(+)(in) = a quinol + NAD(+) + 4 H(+)(out). NDH-1 shuttles electrons from NADH, via FMN and iron-sulfur (Fe-S) centers, to quinones in the respiratory chain. The immediate electron acceptor for the enzyme in this species is believed to be a menaquinone. Couples the redox reaction to proton translocation (for every two electrons transferred, four hydrogen ions are translocated across the cytoplasmic membrane), and thus conserves the redox energy in a proton gradient. In Salinispora arenicola (strain CNS-205), this protein is NADH-quinone oxidoreductase subunit D 1.